Consider the following 71-residue polypeptide: ATP synthase F(0) complex subunit e, mitochondrial (71 aa).

Lysine 34 is modified (N6-acetyllysine). Serine 68 is subject to Phosphoserine.

It belongs to the ATPase e subunit family. Component of the ATP synthase complex composed at least of ATP5F1A/subunit alpha, ATP5F1B/subunit beta, ATP5MC1/subunit c (homooctomer), MT-ATP6/subunit a, MT-ATP8/subunit 8, ATP5ME/subunit e, ATP5MF/subunit f, ATP5MG/subunit g, ATP5MK/subunit k, ATP5MJ/subunit j, ATP5F1C/subunit gamma, ATP5F1D/subunit delta, ATP5F1E/subunit epsilon, ATP5PF/subunit F6, ATP5PB/subunit b, ATP5PD/subunit d, ATP5PO/subunit OSCP. ATP synthase complex consists of a soluble F(1) head domain (subunits alpha(3) and beta(3)) - the catalytic core - and a membrane F(0) domain - the membrane proton channel (subunits c, a, 8, e, f, g, k and j). These two domains are linked by a central stalk (subunits gamma, delta, and epsilon) rotating inside the F1 region and a stationary peripheral stalk (subunits F6, b, d, and OSCP).

It localises to the mitochondrion. The protein localises to the mitochondrion inner membrane. Functionally, subunit e, of the mitochondrial membrane ATP synthase complex (F(1)F(0) ATP synthase or Complex V) that produces ATP from ADP in the presence of a proton gradient across the membrane which is generated by electron transport complexes of the respiratory chain. ATP synthase complex consist of a soluble F(1) head domain - the catalytic core - and a membrane F(1) domain - the membrane proton channel. These two domains are linked by a central stalk rotating inside the F(1) region and a stationary peripheral stalk. During catalysis, ATP synthesis in the catalytic domain of F(1) is coupled via a rotary mechanism of the central stalk subunits to proton translocation. In vivo, can only synthesize ATP although its ATP hydrolase activity can be activated artificially in vitro. Part of the complex F(0) domain. The sequence is that of ATP synthase F(0) complex subunit e, mitochondrial from Sus scrofa (Pig).